Consider the following 70-residue polypeptide: Putative RNA-binding protein YbcJ (70 aa).

Positions 12-68 (VELCDLLKLEGWSESGAQAKIAIAEGQVKVDGAVETRKRCKIVAGQTVSFAGHSVQV) constitute an S4 RNA-binding domain.

In terms of assembly, in pull-down experiments interacts with CedA.

Its structure and the presence of conserved basic residues indicates that it probably binds RNA. This Escherichia coli (strain K12) protein is Putative RNA-binding protein YbcJ (ybcJ).